The chain runs to 141 residues: Large ribosomal subunit protein uL11c (141 aa).

It belongs to the universal ribosomal protein uL11 family. Part of the ribosomal stalk of the 50S ribosomal subunit. Interacts with L10 and the large rRNA to form the base of the stalk. L10 forms an elongated spine to which L12 dimers bind in a sequential fashion forming a multimeric L10(L12)X complex.

The protein localises to the plastid. Its subcellular location is the chloroplast. Functionally, forms part of the ribosomal stalk which helps the ribosome interact with GTP-bound translation factors. The sequence is that of Large ribosomal subunit protein uL11c from Guillardia theta (Cryptophyte).